The sequence spans 189 residues: Thermostable direct hemolysin (189 aa).

Residues 1 to 24 form the signal peptide; the sequence is MKYQYFAKKSFLFISMLAAFKTFA. Cysteine 175 and cysteine 185 are oxidised to a cystine.

Belongs to the TDH hemolysin family. In terms of assembly, homodimer.

Its function is as follows. Bacterial hemolysins are exotoxins that attack blood cell membranes and cause cell rupture by mechanisms not clearly defined. The chain is Thermostable direct hemolysin (tdh) from Vibrio mimicus.